The chain runs to 298 residues: 33 kDa chaperonin (298 aa).

2 cysteine pairs are disulfide-bonded: Cys237–Cys239 and Cys270–Cys273.

This sequence belongs to the HSP33 family. Post-translationally, under oxidizing conditions two disulfide bonds are formed involving the reactive cysteines. Under reducing conditions zinc is bound to the reactive cysteines and the protein is inactive.

It is found in the cytoplasm. Redox regulated molecular chaperone. Protects both thermally unfolding and oxidatively damaged proteins from irreversible aggregation. Plays an important role in the bacterial defense system toward oxidative stress. The protein is 33 kDa chaperonin of Enterococcus faecalis (strain ATCC 700802 / V583).